An 841-amino-acid polypeptide reads, in one-letter code: Translation initiation factor IF-2 (841 aa).

The region spanning Asn341 to Glu508 is the tr-type G domain. Residues Gly350–Thr357 are G1. A GTP-binding site is contributed by Gly350–Thr357. The segment at Gly375 to Cys379 is G2. Positions Asp396–Gly399 are G3. GTP-binding positions include Asp396 to His400 and Asn450 to Asp453. Residues Asn450–Asp453 are G4. The interval Ser486–Lys488 is G5.

Belongs to the TRAFAC class translation factor GTPase superfamily. Classic translation factor GTPase family. IF-2 subfamily.

Its subcellular location is the cytoplasm. Its function is as follows. One of the essential components for the initiation of protein synthesis. Protects formylmethionyl-tRNA from spontaneous hydrolysis and promotes its binding to the 30S ribosomal subunits. Also involved in the hydrolysis of GTP during the formation of the 70S ribosomal complex. The polypeptide is Translation initiation factor IF-2 (Wigglesworthia glossinidia brevipalpis).